The chain runs to 129 residues: M-zodatoxin-Lt8b (129 aa).

A signal peptide spans 1–20 (MKYFVVALALVAAFACIAES). The propeptide occupies 21 to 60 (KPAESEHELAEVEEENELADLEDAVWLEHLADLSDLEEAR). The Processing quadruplet motif signature appears at 57–60 (EEAR).

Cleavage of the propeptide depends on the processing quadruplet motif (XXXR, with at least one of X being E). Expressed by the venom gland.

The protein localises to the secreted. Its function is as follows. Insecticidal, cytolytic and antimicrobial peptide. Forms voltage-dependent, ion-permeable channels in membranes. At high concentration causes cell membrane lysis. This Lachesana tarabaevi (Spider) protein is M-zodatoxin-Lt8b (cit 1-2).